We begin with the raw amino-acid sequence, 405 residues long: Growth/differentiation factor 11 (405 aa).

The signal sequence occupies residues 1–24; sequence MVLAAPLLLGFLLLALELRPRGEA. Positions 25–296 are excised as a propeptide; that stretch reads AEGPAAAAAA…VLENTKRSRR (272 aa). Asn92 carries an N-linked (GlcNAc...) asparagine glycan. 4 disulfides stabilise this stretch: Cys302/Cys312, Cys311/Cys370, Cys339/Cys402, and Cys343/Cys404.

The protein belongs to the TGF-beta family. Homodimer; disulfide-linked. Interacts directly with ACVR2B. Interacts directly with ACVR2A. Interacts with ACVR1B, TGFBR1 and ACVR1C in an ACVR2B-dependent manner. Interacts with FST isoform 2/FS288. Post-translationally, synthesized as large precursor molecule that undergoes proteolytic cleavage by furin-like proteases. This produces an inactive form consisting of the mature C-terminal portion non-covalently bound to its cleaved N-terminal propeptide. Activation of the mature form requires additional cleavage of the propeptide by a tolloid-like metalloproteinase.

The protein resides in the secreted. Secreted signal that acts globally to regulate anterior/posterior axial patterning during development. May play critical roles in patterning both mesodermal and neural tissues. It is required for proper vertebral patterning and orofacial development. Signals through activin receptors type-2, ACVR2A and ACVR2B, and activin receptors type-1, ACVR1B, ACVR1C and TGFBR1 leading to the phosphorylation of SMAD2 and SMAD3. The sequence is that of Growth/differentiation factor 11 (Gdf11) from Rattus norvegicus (Rat).